The sequence spans 255 residues: Na(+)-translocating NADH-quinone reductase subunit C (255 aa).

Residues 12–32 (LFVVIALSLVCSIIVSTAAVG) form a helical membrane-spanning segment. At Thr223 the chain carries FMN phosphoryl threonine.

The protein belongs to the NqrC family. In terms of assembly, composed of six subunits; NqrA, NqrB, NqrC, NqrD, NqrE and NqrF. Requires FMN as cofactor.

The protein localises to the cell inner membrane. It catalyses the reaction a ubiquinone + n Na(+)(in) + NADH + H(+) = a ubiquinol + n Na(+)(out) + NAD(+). Functionally, NQR complex catalyzes the reduction of ubiquinone-1 to ubiquinol by two successive reactions, coupled with the transport of Na(+) ions from the cytoplasm to the periplasm. NqrA to NqrE are probably involved in the second step, the conversion of ubisemiquinone to ubiquinol. This Vibrio anguillarum (Listonella anguillarum) protein is Na(+)-translocating NADH-quinone reductase subunit C.